The following is a 307-amino-acid chain: CRISPR-associated endonuclease Cas1 2 (307 aa).

Residues E142, H206, and E221 each contribute to the Mn(2+) site.

Belongs to the CRISPR-associated endonuclease Cas1 family. In terms of assembly, homodimer, forms a heterotetramer with a Cas2 homodimer. Forms oligomers, probably binds nucleic acids as a homodimer. Mg(2+) is required as a cofactor. It depends on Mn(2+) as a cofactor.

Its function is as follows. CRISPR (clustered regularly interspaced short palindromic repeat), is an adaptive immune system that provides protection against mobile genetic elements (viruses, transposable elements and conjugative plasmids). CRISPR clusters contain spacers, sequences complementary to antecedent mobile elements, and target invading nucleic acids. CRISPR clusters are transcribed and processed into CRISPR RNA (crRNA). Acts as a dsDNA endonuclease. Involved in the integration of spacer DNA into the CRISPR cassette. In terms of biological role, in vitro catalyzes a concerted transesterification reaction on branched DNA, as would be expected during integration of protospacers into the CRISPR leader sequence; Cas2 is not required in vitro. This reaction requires a 3'-OH group at the branch point. Binds ss- and dsDNA and ss- and dsRNA with approximately equal affinity. May be able to anneal complementary DNA strands. In Saccharolobus solfataricus (strain ATCC 35092 / DSM 1617 / JCM 11322 / P2) (Sulfolobus solfataricus), this protein is CRISPR-associated endonuclease Cas1 2.